The primary structure comprises 178 residues: Large ribosomal subunit protein uL6 (178 aa).

This sequence belongs to the universal ribosomal protein uL6 family. Part of the 50S ribosomal subunit.

This protein binds to the 23S rRNA, and is important in its secondary structure. It is located near the subunit interface in the base of the L7/L12 stalk, and near the tRNA binding site of the peptidyltransferase center. In Desulfatibacillum aliphaticivorans, this protein is Large ribosomal subunit protein uL6.